The chain runs to 188 residues: Cell division protein SepF (188 aa).

Over residues 152–162 (TSHDEASTPTV) the composition is skewed to polar residues. The disordered stretch occupies residues 152 to 188 (TSHDEASTPTVVSRDAEAEQQQEAAAAPSPAWGATAL).

The protein belongs to the SepF family. Homodimer. Interacts with FtsZ.

It localises to the cytoplasm. Cell division protein that is part of the divisome complex and is recruited early to the Z-ring. Probably stimulates Z-ring formation, perhaps through the cross-linking of FtsZ protofilaments. Its function overlaps with FtsA. The chain is Cell division protein SepF from Parasynechococcus marenigrum (strain WH8102).